The primary structure comprises 54 residues: Ribulose bisphosphate carboxylase large chain (54 aa).

The propeptide occupies 1-2 (MS). P3 carries the N-acetylproline modification. The residue at position 14 (K14) is an N6,N6,N6-trimethyllysine.

Belongs to the RuBisCO large chain family. Type I subfamily. Heterohexadecamer of 8 large chains and 8 small chains.

It localises to the plastid. The protein resides in the chloroplast. The catalysed reaction is 2 (2R)-3-phosphoglycerate + 2 H(+) = D-ribulose 1,5-bisphosphate + CO2 + H2O. It catalyses the reaction D-ribulose 1,5-bisphosphate + O2 = 2-phosphoglycolate + (2R)-3-phosphoglycerate + 2 H(+). In terms of biological role, ruBisCO catalyzes two reactions: the carboxylation of D-ribulose 1,5-bisphosphate, the primary event in carbon dioxide fixation, as well as the oxidative fragmentation of the pentose substrate in the photorespiration process. Both reactions occur simultaneously and in competition at the same active site. The protein is Ribulose bisphosphate carboxylase large chain (rbcL) of Ilex ciliospinosa (Sichuan holly).